Reading from the N-terminus, the 162-residue chain is Interleukin-15 (162 aa).

The signal sequence occupies residues 1–29 (MRILKPYLRSTSIQCYLCLLLNSHFLTEA). A propeptide spanning residues 30–48 (GIHVFILGCISASLPKTEA) is cleaved from the precursor. 2 cysteine pairs are disulfide-bonded: C83–C133 and C90–C136. Residues N104, N113, N121, and N127 are each glycosylated (N-linked (GlcNAc...) asparagine).

Belongs to the IL-15/IL-21 family.

It localises to the secreted. In terms of biological role, cytokine that plays a major role in the development of inflammatory and protective immune responses to microbial invaders and parasites by modulating immune cells of both the innate and adaptive immune systems. Stimulates the proliferation of natural killer cells, T-cells and B-cells and promotes the secretion of several cytokines. In monocytes, induces the production of IL8 and monocyte chemotactic protein 1/CCL2, two chemokines that attract neutrophils and monocytes respectively to sites of infection. Unlike most cytokines, which are secreted in soluble form, IL15 is expressed in association with its high affinity IL15RA on the surface of IL15-producing cells and delivers signals to target cells that express IL2RB and IL2RG receptor subunits. Binding to its receptor triggers the phosphorylation of JAK1 and JAK3 and the recruitment and subsequent phosphorylation of signal transducer and activator of transcription-3/STAT3 and STAT5. In mast cells, induces the rapid tyrosine phosphorylation of STAT6 and thereby controls mast cell survival and release of cytokines such as IL4. This Bos taurus (Bovine) protein is Interleukin-15 (IL15).